A 104-amino-acid polypeptide reads, in one-letter code: MAAKIRREDEVIVLAGKDKGKRGKVSRVLPTGKLIVEGINLIKKHQKPNPQMGVTGGIVEKEAPIQASNVAIFNSATGKADRVGFRFEDGKKVRFFKSNSELVK.

The protein belongs to the universal ribosomal protein uL24 family. Part of the 50S ribosomal subunit.

In terms of biological role, one of two assembly initiator proteins, it binds directly to the 5'-end of the 23S rRNA, where it nucleates assembly of the 50S subunit. Functionally, one of the proteins that surrounds the polypeptide exit tunnel on the outside of the subunit. This Shewanella loihica (strain ATCC BAA-1088 / PV-4) protein is Large ribosomal subunit protein uL24.